A 185-amino-acid polypeptide reads, in one-letter code: Ribosome-recycling factor (185 aa).

This sequence belongs to the RRF family.

The protein localises to the cytoplasm. Functionally, responsible for the release of ribosomes from messenger RNA at the termination of protein biosynthesis. May increase the efficiency of translation by recycling ribosomes from one round of translation to another. This chain is Ribosome-recycling factor, found in Aliivibrio fischeri (strain ATCC 700601 / ES114) (Vibrio fischeri).